Here is a 228-residue protein sequence, read N- to C-terminus: UPF0758 protein SAB1521c (228 aa).

Positions 102 to 224 (KITQPSDVAD…FTSLVEAGYF (123 aa)) constitute an MPN domain. Residues His-173, His-175, and Asp-186 each coordinate Zn(2+). Positions 173–186 (HNHPSGDVTPSQED) match the JAMM motif motif.

This sequence belongs to the UPF0758 family.

The sequence is that of UPF0758 protein SAB1521c from Staphylococcus aureus (strain bovine RF122 / ET3-1).